Consider the following 1381-residue polypeptide: MLNRENKTAITRKGMVSNRLNKFSIRKYTVGTASILVGTTLIFGLGNQEAKAAESTNKELNEATTSASDNQSSDKVDMQQLNQEDNTKNDNQKEMVSSQGNETTSNGNKLIEKESVQSTTGNKVEVSTAKSDEQASPKSTNEDLNTKQTISNQEALQPDLQENKSVVNVQPTNEENKKVDAKTESTTLNVKSDAIKSNDETLVDNNSNSNNENNADIILPKSTAPKRLNTRMRIAAVQPSSTEAKNVNDLITSNTTLTVVDADKNNKIVPAQDYLSLKSQITVDDKVKSGDYFTIKYSDTVQVYGLNPEDIKNIGDIKDPNNGETIATAKHDTANNLITYTFTDYVDRFNSVQMGINYSIYMDADTIPVSKNDVEFNVTIGNTTTKTTANIQYPDYVVNEKNSIGSAFTETVSHVGNKENPGYYKQTIYVNPSENSLTNAKLKVQAYHSSYPNNIGQINKDVTDIKIYQVPKGYTLNKGYDVNTKELTDVTNQYLQKITYGDNNSAVIDFGNADSAYVVMVNTKFQYTNSESPTLVQMATLSSTGNKSVSTGNALGFTNNQSGGAGQEVYKIGNYVWEDTNKNGVQELGEKGVGNVTVTVFDNNTNTKVGEAVTKEDGSYLIPNLPNGDYRVEFSNLPKGYEVTPSKQGNNEELDSNGLSSVITVNGKDNLSADLGIYKPKYNLGDYVWEDTNKNGIQDQDEKGISGVTVTLKDENGNVLKTVTTDADGKYKFTDLDNGNYKVEFTTPEGYTPTTVTSGSDIEKDSNGLTTTGVINGADNMTLDSGFYKTPKYNLGNYVWEDTNKDGKQDSTEKGISGVTVTLKNENGEVLQTTKTDKDGKYQFTGLENGTYKVEFETPSGYTPTQVGSGTDEGIDSNGTSTTGVIKDKDNDTIDSGFYKPTYNLGDYVWEDTNKNGVQDKDEKGISGVTVTLKDENDKVLKTVTTDENGKYQFTDLNNGTYKVEFETPSGYTPTSVTSGNDTEKDSNGLTTTGVIKDADNMTLDSGFYKTPKYSLGDYVWYDSNKDGKQDSTEKGIKDVKVTLLNEKGEVIGTTKTDENGKYCFDNLDSGKYKVIFEKPAGLTQTGTNTTEDDKDADGGEVDVTITDHDDFTLDNGYYEEETSDSDSDSDSDSDSDRDSDSDSDSDSDSDSDSDSDSDSDSDSDSDRDSDSDSDSDSDSDSDSDSDSDSDSDSDSDSDSDSDSDSDSDSDSDSDSDSDSDSDSDSDSDSDSDSDSDSDSDSDSDSDSDSDSDSDSDSDSDSDSDSDSDSDSDSDSDSDSDSDSDSDSDSDSDSDSDSDSDSDSDSDSDSDSDSDSDSDSDAGKHTPVKPMSTTKDHHNKAKALPETGNENSGSNNATLFGGLFAALGSLLLFGRRKKQNK.

The N-terminal stretch at 1 to 35 (MLNRENKTAITRKGMVSNRLNKFSIRKYTVGTASI) is a signal peptide. The YSIRK-G/S signaling motif motif lies at 23–34 (FSIRKYTVGTAS). The interval 36–568 (LVGTTLIFGL…NNQSGGAGQE (533 aa)) is ligand binding A region. Positions 54 to 185 (ESTNKELNEA…NKKVDAKTES (132 aa)) are disordered. Composition is skewed to polar residues over residues 62 to 71 (EATTSASDNQ) and 94 to 108 (EMVSSQGNETTSNGN). A compositionally biased stretch (basic and acidic residues) spans 130–145 (KSDEQASPKSTNEDLN). 2 stretches are compositionally biased toward polar residues: residues 146-155 (TKQTISNQEA) and 163-173 (NKSVVNVQPTN). The span at 174–183 (EENKKVDAKT) shows a compositional bias: basic and acidic residues. CNA-B domains follow at residues 569–680 (VYKI…IYKP), 681–791 (KYNL…YKTP), 792–901 (KYNL…FYKP), 902–1012 (TYNL…YKTP), and 1013–1123 (KYSL…EEET). 3 disordered regions span residues 857-883 (ETPSGYTPTQVGSGTDEGIDSNGTSTT), 972-992 (YTPTSVTSGNDTEKDSNGLTT), and 1078-1357 (EKPA…SNNA). Composition is skewed to polar residues over residues 860–869 (SGYTPTQVGS) and 972–981 (YTPTSVTSGN). 4 stretches are compositionally biased toward acidic residues: residues 1091-1101 (TEDDKDADGGE), 1118-1134 (YYEEETSDSDSDSDSDS), 1142-1164 (SDSDSDSDSDSDSDSDSDSDSDS), and 1172-1320 (SDSD…DSDS). The LPXTG sorting signal signature appears at 1344–1348 (LPETG). Thr1347 is modified (pentaglycyl murein peptidoglycan amidated threonine). Residues 1348 to 1381 (GNENSGSNNATLFGGLFAALGSLLLFGRRKKQNK) constitute a propeptide, removed by sortase.

This sequence belongs to the serine-aspartate repeat-containing protein (SDr) family. As to quaternary structure, interacts with host DSG1; this interaction increases S.aureus adherence to keratinocytes.

Its subcellular location is the secreted. The protein localises to the cell wall. Functionally, cell surface-associated calcium-binding protein which plays an important role in adhesion and pathogenesis. Mediates interactions with components of the extracellular matrix such as host DSG1 to promote bacterial adhesion to host cells. Contributes to the resistance to killing by innate immune components such as neutrophils present in blood and thus attenuates bacterial clearance. The polypeptide is Serine-aspartate repeat-containing protein D (sdrD) (Staphylococcus aureus (strain USA300)).